A 266-amino-acid chain; its full sequence is Signal peptidase I (266 aa).

Residues 1–20 (MQTDNTKSNTNKTAKQEWWS) lie on the Cytoplasmic side of the membrane. Residues 21 to 41 (CAFVICIALLIRILIMEPFTV) traverse the membrane as a helical segment. Residues 42 to 266 (PTGSMKATIL…IFRNLYNTDE (225 aa)) lie on the Periplasmic side of the membrane. Active-site residues include S45 and K108.

It belongs to the peptidase S26 family.

The protein localises to the cell inner membrane. The catalysed reaction is Cleavage of hydrophobic, N-terminal signal or leader sequences from secreted and periplasmic proteins.. This chain is Signal peptidase I (lepB), found in Rickettsia akari (strain Hartford).